The chain runs to 181 residues: Isopentenyl-diphosphate Delta-isomerase (181 aa).

Histidine 24 and histidine 30 together coordinate Mn(2+). In terms of domain architecture, Nudix hydrolase spans 28 to 168 (LLHLAFSVLL…PDTFSVWFPT (141 aa)). Cysteine 68 is an active-site residue. Histidine 70 contacts Mn(2+). Residue glutamate 88 participates in Mg(2+) binding. Glutamate 117 and glutamate 119 together coordinate Mn(2+). The active site involves glutamate 119.

This sequence belongs to the IPP isomerase type 1 family. The cofactor is Mg(2+). Mn(2+) serves as cofactor.

Its subcellular location is the cytoplasm. It catalyses the reaction isopentenyl diphosphate = dimethylallyl diphosphate. It functions in the pathway isoprenoid biosynthesis; dimethylallyl diphosphate biosynthesis; dimethylallyl diphosphate from isopentenyl diphosphate: step 1/1. Its function is as follows. Catalyzes the 1,3-allylic rearrangement of the homoallylic substrate isopentenyl (IPP) to its highly electrophilic allylic isomer, dimethylallyl diphosphate (DMAPP). In Aliivibrio fischeri (strain MJ11) (Vibrio fischeri), this protein is Isopentenyl-diphosphate Delta-isomerase.